Reading from the N-terminus, the 342-residue chain is Phosphate acyltransferase (342 aa).

Belongs to the PlsX family. In terms of assembly, homodimer. Probably interacts with PlsY.

The protein resides in the cytoplasm. It catalyses the reaction a fatty acyl-[ACP] + phosphate = an acyl phosphate + holo-[ACP]. The protein operates within lipid metabolism; phospholipid metabolism. Functionally, catalyzes the reversible formation of acyl-phosphate (acyl-PO(4)) from acyl-[acyl-carrier-protein] (acyl-ACP). This enzyme utilizes acyl-ACP as fatty acyl donor, but not acyl-CoA. The protein is Phosphate acyltransferase of Legionella pneumophila (strain Corby).